Reading from the N-terminus, the 215-residue chain is Ribose-5-phosphate isomerase A (215 aa).

Substrate-binding positions include 26-29 (TGST), 79-82 (DGAD), and 92-95 (KGGG). The Proton acceptor role is filled by E101. K119 serves as a coordination point for substrate.

Belongs to the ribose 5-phosphate isomerase family. Homodimer.

It catalyses the reaction aldehydo-D-ribose 5-phosphate = D-ribulose 5-phosphate. It participates in carbohydrate degradation; pentose phosphate pathway; D-ribose 5-phosphate from D-ribulose 5-phosphate (non-oxidative stage): step 1/1. Functionally, catalyzes the reversible conversion of ribose-5-phosphate to ribulose 5-phosphate. The polypeptide is Ribose-5-phosphate isomerase A (Xylella fastidiosa (strain Temecula1 / ATCC 700964)).